Consider the following 206-residue polypeptide: Large ribosomal subunit protein uL4 (206 aa).

The disordered stretch occupies residues 43-78 (ARSGNRKQKDREEVHHTTKKPWRQKGTGRARAGMSS). Residues 49–58 (KQKDREEVHH) show a composition bias toward basic and acidic residues. Positions 59-70 (TTKKPWRQKGTG) are enriched in basic residues.

It belongs to the universal ribosomal protein uL4 family. In terms of assembly, part of the 50S ribosomal subunit.

One of the primary rRNA binding proteins, this protein initially binds near the 5'-end of the 23S rRNA. It is important during the early stages of 50S assembly. It makes multiple contacts with different domains of the 23S rRNA in the assembled 50S subunit and ribosome. Its function is as follows. Forms part of the polypeptide exit tunnel. The protein is Large ribosomal subunit protein uL4 of Janthinobacterium sp. (strain Marseille) (Minibacterium massiliensis).